Reading from the N-terminus, the 113-residue chain is MTTEIALKDQSCETIEKGSKAMIIPRIESYLSQMPGWDVPLDYQTLTKTFSFKNYHQTVAFVNAITWVAHKEDHHPEICFGYNECKVILTTHSIKGISQNDFIMAAKIDALLD.

This sequence belongs to the pterin-4-alpha-carbinolamine dehydratase family.

The catalysed reaction is (4aS,6R)-4a-hydroxy-L-erythro-5,6,7,8-tetrahydrobiopterin = (6R)-L-erythro-6,7-dihydrobiopterin + H2O. The chain is Putative pterin-4-alpha-carbinolamine dehydratase from Hydrogenovibrio crunogenus (strain DSM 25203 / XCL-2) (Thiomicrospira crunogena).